Consider the following 199-residue polypeptide: UPF0329 protein ECU01_0120/ECU01_1490/ECU08_0050 (199 aa).

It belongs to the UPF0329 family.

This is UPF0329 protein ECU01_0120/ECU01_1490/ECU08_0050 from Encephalitozoon cuniculi (strain GB-M1) (Microsporidian parasite).